Here is a 290-residue protein sequence, read N- to C-terminus: Nucleotide-binding protein XF_1405 (290 aa).

Residue glycine 13 to serine 20 participates in ATP binding. Residue aspartate 65 to serine 68 coordinates GTP.

It belongs to the RapZ-like family.

Functionally, displays ATPase and GTPase activities. The chain is Nucleotide-binding protein XF_1405 from Xylella fastidiosa (strain 9a5c).